The primary structure comprises 624 residues: Actin-related protein 8 (624 aa).

The residue at position 1 (Met1) is an N-acetylmethionine. Basic and acidic residues predominate over residues 1–25; it reads MTQAEKGEAENGKEKGGEKEKEQRG. The interval 1–29 is disordered; sequence MTQAEKGEAENGKEKGGEKEKEQRGVKRP. Ser55 and Thr56 together coordinate ATP. Ser132 is modified (phosphoserine). 283 to 286 is a binding site for ATP; sequence DVGD. Position 412 is a phosphoserine (Ser412). Residues 430–462 form a disordered region; sequence SKQEQSAKATADRKSASKPIGFEGDLRGQSSDL.

It belongs to the actin family. ARP8 subfamily. As to quaternary structure, component of the chromatin remodeling INO80 complex; specifically part of a complex module associated with the DBINO domain of INO80. Exists as monomers and dimers, but the dimer is most probably the biologically relevant form required for stable interactions with histones that exploits the twofold symmetry of the nucleosome core.

Its subcellular location is the nucleus. It is found in the chromosome. In terms of biological role, plays an important role in the functional organization of mitotic chromosomes. Exhibits low basal ATPase activity, and unable to polymerize. Its function is as follows. Proposed core component of the chromatin remodeling INO80 complex which is involved in transcriptional regulation, DNA replication and probably DNA repair. Required for the recruitment of INO80 (and probably the INO80 complex) to sites of DNA damage Strongly prefer nucleosomes and H3-H4 tetramers over H2A-H2B dimers, suggesting it may act as a nucleosome recognition module within the complex. This chain is Actin-related protein 8 (ACTR8), found in Bos taurus (Bovine).